The sequence spans 247 residues: Chymase (247 aa).

The N-terminal stretch at 1-19 (MHLLTLHLLLLLLGSSTKA) is a signal peptide. A propeptide spans 20–21 (GE) (activation peptide). In terms of domain architecture, Peptidase S1 spans 22–245 (IIGGTECIPH…YRPWINKILR (224 aa)). Cysteines 51 and 67 form a disulfide. The active-site Charge relay system is the His-66. N-linked (GlcNAc...) asparagine glycosylation occurs at Asn-80. Asp-110 (charge relay system) is an active-site residue. 2 disulfides stabilise this stretch: Cys-144-Cys-209 and Cys-175-Cys-188. Ser-203 (charge relay system) is an active-site residue.

The protein belongs to the peptidase S1 family. Granzyme subfamily. In terms of tissue distribution, mast cells.

It localises to the secreted. Its subcellular location is the cytoplasmic granule. It catalyses the reaction Preferential cleavage: Phe-|-Xaa &gt; Tyr-|-Xaa &gt; Trp-|-Xaa &gt; Leu-|-Xaa.. Its function is as follows. Major secreted protease of mast cells with suspected roles in vasoactive peptide generation, extracellular matrix degradation, and regulation of gland secretion. The sequence is that of Chymase (Cma1) from Mus musculus (Mouse).